We begin with the raw amino-acid sequence, 434 residues long: Trigger factor (434 aa).

The PPIase FKBP-type domain occupies 160–245; that stretch reads GDKAKINFVG…LNEVQAANLP (86 aa).

Belongs to the FKBP-type PPIase family. Tig subfamily.

The protein localises to the cytoplasm. It catalyses the reaction [protein]-peptidylproline (omega=180) = [protein]-peptidylproline (omega=0). Involved in protein export. Acts as a chaperone by maintaining the newly synthesized protein in an open conformation. Functions as a peptidyl-prolyl cis-trans isomerase. The polypeptide is Trigger factor (Shewanella halifaxensis (strain HAW-EB4)).